Here is a 115-residue protein sequence, read N- to C-terminus: Macrophage migration inhibitory factor (115 aa).

P2 (proton acceptor; via imino nitrogen) is an active-site residue. K33 and I65 together coordinate substrate. K78 carries the N6-acetyllysine; alternate modification. The residue at position 78 (K78) is an N6-succinyllysine; alternate. N98 contributes to the substrate binding site.

This sequence belongs to the MIF family. In terms of assembly, homotrimer. Interacts with CXCR2 extracellular domain. Interacts with the CD74 extracellular domain, USO1, COPS5 and BNIPL.

Its subcellular location is the secreted. The protein resides in the cytoplasm. It carries out the reaction 3-phenylpyruvate = enol-phenylpyruvate. It catalyses the reaction L-dopachrome = 5,6-dihydroxyindole-2-carboxylate. Pro-inflammatory cytokine involved in the innate immune response to bacterial pathogens. The expression of MIF at sites of inflammation suggests a role as mediator in regulating the function of macrophages in host defense. Counteracts the anti-inflammatory activity of glucocorticoids. Has phenylpyruvate tautomerase and dopachrome tautomerase activity (in vitro), but the physiological substrate is not known. It is not clear whether the tautomerase activity has any physiological relevance, and whether it is important for cytokine activity. This chain is Macrophage migration inhibitory factor (MIF), found in Meriones unguiculatus (Mongolian jird).